A 281-amino-acid polypeptide reads, in one-letter code: Bis(5'-nucleosyl)-tetraphosphatase, symmetrical (281 aa).

Belongs to the Ap4A hydrolase family.

It catalyses the reaction P(1),P(4)-bis(5'-adenosyl) tetraphosphate + H2O = 2 ADP + 2 H(+). In terms of biological role, hydrolyzes diadenosine 5',5'''-P1,P4-tetraphosphate to yield ADP. This Delftia acidovorans (strain DSM 14801 / SPH-1) protein is Bis(5'-nucleosyl)-tetraphosphatase, symmetrical.